An 88-amino-acid chain; its full sequence is Translation initiation factor IF-1 2 (88 aa).

One can recognise an S1-like domain in the interval 1-72 (MAKEELIELQ…TKGRINFRHK (72 aa)).

It belongs to the IF-1 family. Component of the 30S ribosomal translation pre-initiation complex which assembles on the 30S ribosome in the order IF-2 and IF-3, IF-1 and N-formylmethionyl-tRNA(fMet); mRNA recruitment can occur at any time during PIC assembly.

Its subcellular location is the cytoplasm. One of the essential components for the initiation of protein synthesis. Stabilizes the binding of IF-2 and IF-3 on the 30S subunit to which N-formylmethionyl-tRNA(fMet) subsequently binds. Helps modulate mRNA selection, yielding the 30S pre-initiation complex (PIC). Upon addition of the 50S ribosomal subunit IF-1, IF-2 and IF-3 are released leaving the mature 70S translation initiation complex. The sequence is that of Translation initiation factor IF-1 2 from Bordetella avium (strain 197N).